A 117-amino-acid polypeptide reads, in one-letter code: Large ribosomal subunit protein bL20 (117 aa).

The protein belongs to the bacterial ribosomal protein bL20 family.

Binds directly to 23S ribosomal RNA and is necessary for the in vitro assembly process of the 50S ribosomal subunit. It is not involved in the protein synthesizing functions of that subunit. The chain is Large ribosomal subunit protein bL20 from Maridesulfovibrio salexigens (strain ATCC 14822 / DSM 2638 / NCIMB 8403 / VKM B-1763) (Desulfovibrio salexigens).